Reading from the N-terminus, the 301-residue chain is Ornithine carbamoyltransferase (301 aa).

Residues 47–50 (STRT), Gln74, Arg98, and 125–128 (HPMQ) contribute to the carbamoyl phosphate site. Residues Asn156, Asp220, and 224 to 225 (SM) contribute to the L-ornithine site. Carbamoyl phosphate-binding positions include 260–261 (CL) and Arg288.

This sequence belongs to the aspartate/ornithine carbamoyltransferase superfamily. OTCase family.

The protein localises to the cytoplasm. The catalysed reaction is carbamoyl phosphate + L-ornithine = L-citrulline + phosphate + H(+). The protein operates within amino-acid biosynthesis; L-arginine biosynthesis; L-arginine from L-ornithine and carbamoyl phosphate: step 1/3. Its function is as follows. Reversibly catalyzes the transfer of the carbamoyl group from carbamoyl phosphate (CP) to the N(epsilon) atom of ornithine (ORN) to produce L-citrulline. This chain is Ornithine carbamoyltransferase, found in Picrophilus torridus (strain ATCC 700027 / DSM 9790 / JCM 10055 / NBRC 100828 / KAW 2/3).